The following is a 418-amino-acid chain: tRNA(Met) cytidine acetate ligase (418 aa).

ATP is bound by residues Gly-95, Asn-161, and Arg-186.

The protein belongs to the TmcAL family.

The protein resides in the cytoplasm. It carries out the reaction cytidine(34) in elongator tRNA(Met) + acetate + ATP = N(4)-acetylcytidine(34) in elongator tRNA(Met) + AMP + diphosphate. Catalyzes the formation of N(4)-acetylcytidine (ac(4)C) at the wobble position of elongator tRNA(Met), using acetate and ATP as substrates. First activates an acetate ion to form acetyladenylate (Ac-AMP) and then transfers the acetyl group to tRNA to form ac(4)C34. This is tRNA(Met) cytidine acetate ligase from Thermotoga petrophila (strain ATCC BAA-488 / DSM 13995 / JCM 10881 / RKU-1).